Here is a 1996-residue protein sequence, read N- to C-terminus: Non-reducing polyketide synthase atnG (1996 aa).

The interval 9 to 245 (FLFGDQADAP…AELPAFGAVH (237 aa)) is N-terminal acylcarrier protein transacylase (SAT) domain. A Ketosynthase family 3 (KS3) domain is found at 366 to 794 (SGSVAVIGMS…GGNSCFVLEE (429 aa)). Active-site for beta-ketoacyl synthase activity residues include cysteine 538, histidine 673, and histidine 713. A malonyl-CoA:ACP transacylase (MAT) domain region spans residues 891-1150 (AFAFTGQGAH…VKYTQAISHC (260 aa)). The For acyl/malonyl transferase activity role is filled by serine 982. The segment at 1263–1392 (HHLVSQDDNG…CCIRQTDEQD (130 aa)) is N-terminal hotdog fold. The region spanning 1263 to 1569 (HHLVSQDDNG…FRKMPRTTLH (307 aa)) is the PKS/mFAS DH domain. Positions 1267–1568 (SQDDNGKEQS…RFRKMPRTTL (302 aa)) are product template (PT) domain. Histidine 1295 (proton acceptor; for dehydratase activity) is an active-site residue. The interval 1416–1569 (ASGIANRFQG…FRKMPRTTLH (154 aa)) is C-terminal hotdog fold. The Proton donor; for dehydratase activity role is filled by aspartate 1481. The disordered stretch occupies residues 1573-1621 (GKAVPPKPAKETSHPSVEATAPATTNGRSSATNAQAEAPAPPVNGSNGH). A compositionally biased stretch (polar residues) spans 1594 to 1607 (PATTNGRSSATNAQ). The 78-residue stretch at 1620–1697 (GHRKTVESVL…DAQRQLRTLE (78 aa)) folds into the Carrier domain. The residue at position 1657 (serine 1657) is an O-(pantetheine 4'-phosphoryl)serine. The thioesterase (TE) domain stretch occupies residues 1725–1923 (KRECNVVLMQ…ERTFVVWAKK (199 aa)).

The protein operates within secondary metabolite biosynthesis; terpenoid biosynthesis. In terms of biological role, non-reducing polyketide synthase; part of the gene cluster that mediates the biosynthesis of the meroterpenoids arthripenoids. The pathway begins with the HR-PKS atnH that catalyzes two chain-extension steps to form a reduced triketide, which then primes the SAT domain in the NR-PKS atnG to initiate three more cycles of extension to give a linear hexaketide corresponding to the polyketide part of arthripenoids. The FAD-dependent monooxygenase atnJ then performs an oxidative decarboxylation at C11 of the atnH/atnG product, via an electrophilic aromatic hydroxylation with concomitant ipso-decarboxylation. The membrane-bound polyprenyl transferase atnF then introduces a farnesyl group before the FAD-dependent monooxygenase atnK functions as the first epoxidase on terminal C12'-C13' olefin, followed by a second epoxidation on C7'-C8' catalyzed by atnA. The terpene cyclase/mutase atnI then initiates the sequential tricyclic ring formation through protonation of the terminal epoxide and catalyzes the regioselective and stereoselective 6/6/6-tricyclic ring formation. The cytochrome P450 monooxygenase atnM is responsible for hydroxylating both C1' and C10'. The next steps may involve ketoreduction and acetyl transfer by the ketoreductase atnB and the acetyltransferase atnC, and lead to the production of arthripenoid B, the final biosynthetic product of the atn cluster. The hydroquinone moiety in arthripenoid B is prone to undergo spontaneous oxidation to afford a benzoquinone compound, a key intermediate for generating structure diversity. For instance, addition of a cysteine followed by ring contraction gives arthripenoid A, tautomerization gives the main product arthripenoid C, addition of a molecular of water or amine affords arthripenoid D or E, respectively, and loss of one water forms arthripenoid F. The polypeptide is Non-reducing polyketide synthase atnG (Arthrinium sp).